Here is a 357-residue protein sequence, read N- to C-terminus: Hyaluronidase (357 aa).

Positions 1–26 (MLLVTLFLFFLQALVNGDSCGSNCEK) are cleaved as a signal peptide. 2 disulfide bridges follow: Cys-45-Cys-334 and Cys-211-Cys-223. N-linked (GlcNAc...) asparagine glycans are attached at residues Asn-105 and Asn-125. The active-site Proton donor is the Glu-135. Asn-153 carries an N-linked (GlcNAc...) asparagine glycan. Asn-351 carries an N-linked (GlcNAc...) asparagine glycan.

The protein belongs to the glycosyl hydrolase 56 family.

The protein resides in the secreted. The catalysed reaction is Random hydrolysis of (1-&gt;4)-linkages between N-acetyl-beta-D-glucosamine and D-glucuronate residues in hyaluronate.. Functionally, hydrolyzes high molecular weight hyaluronic acid to produce small oligosaccharides. The sequence is that of Hyaluronidase from Vespa magnifica (Hornet).